The sequence spans 276 residues: Light-independent protochlorophyllide reductase iron-sulfur ATP-binding protein (276 aa).

ATP is bound by residues Gly12–Thr17 and Lys41. Ser16 is a Mg(2+) binding site. Cys97 and Cys131 together coordinate [4Fe-4S] cluster. Asn182–Arg183 serves as a coordination point for ATP.

This sequence belongs to the NifH/BchL/ChlL family. In terms of assembly, homodimer. Protochlorophyllide reductase is composed of three subunits; BchL, BchN and BchB. [4Fe-4S] cluster serves as cofactor.

The catalysed reaction is chlorophyllide a + oxidized 2[4Fe-4S]-[ferredoxin] + 2 ADP + 2 phosphate = protochlorophyllide a + reduced 2[4Fe-4S]-[ferredoxin] + 2 ATP + 2 H2O. It functions in the pathway porphyrin-containing compound metabolism; bacteriochlorophyll biosynthesis (light-independent). Component of the dark-operative protochlorophyllide reductase (DPOR) that uses Mg-ATP and reduced ferredoxin to reduce ring D of protochlorophyllide (Pchlide) to form chlorophyllide a (Chlide). This reaction is light-independent. The L component serves as a unique electron donor to the NB-component of the complex, and binds Mg-ATP. This Chlorobaculum tepidum (strain ATCC 49652 / DSM 12025 / NBRC 103806 / TLS) (Chlorobium tepidum) protein is Light-independent protochlorophyllide reductase iron-sulfur ATP-binding protein.